Reading from the N-terminus, the 113-residue chain is Nucleoid-associated protein Athe_1143 (113 aa).

This sequence belongs to the YbaB/EbfC family. As to quaternary structure, homodimer.

The protein localises to the cytoplasm. Its subcellular location is the nucleoid. Its function is as follows. Binds to DNA and alters its conformation. May be involved in regulation of gene expression, nucleoid organization and DNA protection. The chain is Nucleoid-associated protein Athe_1143 from Caldicellulosiruptor bescii (strain ATCC BAA-1888 / DSM 6725 / KCTC 15123 / Z-1320) (Anaerocellum thermophilum).